Reading from the N-terminus, the 331-residue chain is tRNA-cytidine(32) 2-sulfurtransferase (331 aa).

Residues 1–31 (MNAPHMNDTTADAATLDATAAPAGRPALTRR) form a disordered region. The span at 8–23 (DTTADAATLDATAAPA) shows a compositional bias: low complexity. The PP-loop motif motif lies at 71 to 76 (SGGKDS). Residues C146, C149, and C237 each coordinate [4Fe-4S] cluster.

The protein belongs to the TtcA family. Homodimer. Requires Mg(2+) as cofactor. [4Fe-4S] cluster serves as cofactor.

It is found in the cytoplasm. The enzyme catalyses cytidine(32) in tRNA + S-sulfanyl-L-cysteinyl-[cysteine desulfurase] + AH2 + ATP = 2-thiocytidine(32) in tRNA + L-cysteinyl-[cysteine desulfurase] + A + AMP + diphosphate + H(+). It participates in tRNA modification. In terms of biological role, catalyzes the ATP-dependent 2-thiolation of cytidine in position 32 of tRNA, to form 2-thiocytidine (s(2)C32). The sulfur atoms are provided by the cysteine/cysteine desulfurase (IscS) system. This chain is tRNA-cytidine(32) 2-sulfurtransferase, found in Burkholderia lata (strain ATCC 17760 / DSM 23089 / LMG 22485 / NCIMB 9086 / R18194 / 383).